A 101-amino-acid chain; its full sequence is UPF0134 protein MPN_675 (101 aa).

The protein belongs to the UPF0134 family.

The protein is UPF0134 protein MPN_675 of Mycoplasma pneumoniae (strain ATCC 29342 / M129 / Subtype 1) (Mycoplasmoides pneumoniae).